A 349-amino-acid chain; its full sequence is Small ribosomal subunit protein eS6 (349 aa).

The interval 224 to 349 (RRRSRLSSMR…AKKEKKQKKK (126 aa)) is disordered. Composition is skewed to basic and acidic residues over residues 231 to 251 (SMRD…EKAA) and 260 to 334 (KKEA…EAAK).

The protein belongs to the eukaryotic ribosomal protein eS6 family. Component of the small ribosomal subunit. Part of the small subunit (SSU) processome, composed of more than 70 proteins and the RNA chaperone small nucleolar RNA (snoRNA) U3. Post-translationally, ribosomal protein S6 is the major substrate of protein kinases in eukaryote ribosomes.

It is found in the cytoplasm. The protein resides in the nucleus. Its subcellular location is the nucleolus. Functionally, component of the 40S small ribosomal subunit. Plays an important role in controlling cell growth and proliferation through the selective translation of particular classes of mRNA. Part of the small subunit (SSU) processome, first precursor of the small eukaryotic ribosomal subunit. During the assembly of the SSU processome in the nucleolus, many ribosome biogenesis factors, an RNA chaperone and ribosomal proteins associate with the nascent pre-rRNA and work in concert to generate RNA folding, modifications, rearrangements and cleavage as well as targeted degradation of pre-ribosomal RNA by the RNA exosome. This Aedes albopictus (Asian tiger mosquito) protein is Small ribosomal subunit protein eS6 (RpS6).